The primary structure comprises 247 residues: Probable transcriptional regulatory protein HRM2_04000 (247 aa).

This sequence belongs to the TACO1 family.

Its subcellular location is the cytoplasm. This chain is Probable transcriptional regulatory protein HRM2_04000, found in Desulforapulum autotrophicum (strain ATCC 43914 / DSM 3382 / VKM B-1955 / HRM2) (Desulfobacterium autotrophicum).